Reading from the N-terminus, the 242-residue chain is N-alpha-acetyltransferase 60 (242 aa).

The Cytoplasmic segment spans residues 1–192; the sequence is MTEVVPSSAL…GGHPPWTILD (192 aa). The 170-residue stretch at 13–182 folds into the N-acetyltransferase domain; that stretch reads VSLRLLCHDD…DGFTYVLYIN (170 aa). Tyrosine 38 is a binding site for substrate. Lysine 79 is subject to N6-acetyllysine; by autocatalysis. Tyrosine 97 is a catalytic residue. Position 99 (leucine 99) interacts with substrate. 101 to 103 serves as a coordination point for acetyl-CoA; it reads LGV. N6-acetyllysine; by autocatalysis occurs at positions 105, 109, and 121. 109 to 114 contributes to the acetyl-CoA binding site; sequence KHGIGS. Histidine 138 is a catalytic residue. Residues asparagine 143 and 150–153 contribute to the acetyl-CoA site; that span reads YENR. The required for homodimerization stretch occupies residues 162 to 173; the sequence is PYYYSIRGVLKD. Tyrosine 165 serves as a coordination point for substrate. An intramembrane region (helical) is located at residues 193 to 236; sequence YIQHLGSALANLSPCSIPHRIYRQAHSLLCSFLPWSSISTKGGI. Topologically, residues 237-242 are cytoplasmic; it reads EYSRTM.

It belongs to the acetyltransferase family. NAA60 subfamily. In terms of assembly, monomer and homodimer; monomer in presence of substrate and homodimer in its absence. Post-translationally, acetylated: autoacetylation is required for optimal acetyltransferase activity.

It is found in the golgi apparatus membrane. It catalyses the reaction N-terminal L-methionyl-[transmembrane protein] + acetyl-CoA = N-terminal N(alpha)-acetyl-L-methionyl-[transmembrane protein] + CoA + H(+). The enzyme catalyses L-lysyl-[protein] + acetyl-CoA = N(6)-acetyl-L-lysyl-[protein] + CoA + H(+). Functionally, N-alpha-acetyltransferase that specifically mediates the acetylation of N-terminal residues of the transmembrane proteins, with a strong preference for N-termini facing the cytosol. Displays N-terminal acetyltransferase activity towards a range of N-terminal sequences including those starting with Met-Lys, Met-Val, Met-Ala and Met-Met. Required for normal chromosomal segregation during anaphase. May also show histone acetyltransferase activity; such results are however unclear in vivo and would require additional experimental evidences. The sequence is that of N-alpha-acetyltransferase 60 (Naa60) from Mus musculus (Mouse).